Here is a 454-residue protein sequence, read N- to C-terminus: Bifunctional protein GlmU (454 aa).

Positions 1–226 are pyrophosphorylase; sequence MALNVVILAA…AIEVEGANNR (226 aa). UDP-N-acetyl-alpha-D-glucosamine-binding positions include 8–11, Lys22, Gln73, 78–79, 100–102, Gly137, Glu151, Asn166, and Asn224; these read LAAG, GT, and YGD. Asp102 lines the Mg(2+) pocket. Residue Asn224 participates in Mg(2+) binding. The linker stretch occupies residues 227–247; it reads VQLAQLERAYQAREAEKLMIA. Positions 248–454 are N-acetyltransferase; that stretch reads GANLRDPSRI…GWQRPVKIKK (207 aa). Positions 330 and 348 each coordinate UDP-N-acetyl-alpha-D-glucosamine. His360 (proton acceptor) is an active-site residue. The UDP-N-acetyl-alpha-D-glucosamine site is built by Tyr363 and Asn374. Residues Ala377, 383–384, Ser402, Ala420, and Arg437 each bind acetyl-CoA; that span reads NY.

This sequence in the N-terminal section; belongs to the N-acetylglucosamine-1-phosphate uridyltransferase family. It in the C-terminal section; belongs to the transferase hexapeptide repeat family. As to quaternary structure, homotrimer. The cofactor is Mg(2+).

It is found in the cytoplasm. The enzyme catalyses alpha-D-glucosamine 1-phosphate + acetyl-CoA = N-acetyl-alpha-D-glucosamine 1-phosphate + CoA + H(+). It carries out the reaction N-acetyl-alpha-D-glucosamine 1-phosphate + UTP + H(+) = UDP-N-acetyl-alpha-D-glucosamine + diphosphate. Its pathway is nucleotide-sugar biosynthesis; UDP-N-acetyl-alpha-D-glucosamine biosynthesis; N-acetyl-alpha-D-glucosamine 1-phosphate from alpha-D-glucosamine 6-phosphate (route II): step 2/2. It participates in nucleotide-sugar biosynthesis; UDP-N-acetyl-alpha-D-glucosamine biosynthesis; UDP-N-acetyl-alpha-D-glucosamine from N-acetyl-alpha-D-glucosamine 1-phosphate: step 1/1. It functions in the pathway bacterial outer membrane biogenesis; LPS lipid A biosynthesis. Catalyzes the last two sequential reactions in the de novo biosynthetic pathway for UDP-N-acetylglucosamine (UDP-GlcNAc). The C-terminal domain catalyzes the transfer of acetyl group from acetyl coenzyme A to glucosamine-1-phosphate (GlcN-1-P) to produce N-acetylglucosamine-1-phosphate (GlcNAc-1-P), which is converted into UDP-GlcNAc by the transfer of uridine 5-monophosphate (from uridine 5-triphosphate), a reaction catalyzed by the N-terminal domain. In Shewanella oneidensis (strain ATCC 700550 / JCM 31522 / CIP 106686 / LMG 19005 / NCIMB 14063 / MR-1), this protein is Bifunctional protein GlmU.